The sequence spans 546 residues: Chaperonin GroEL 2 (546 aa).

ATP-binding positions include 30–33 (TLGP), Lys-51, 87–91 (DGTTT), Gly-415, and Asp-495.

It belongs to the chaperonin (HSP60) family. In terms of assembly, forms a cylinder of 14 subunits composed of two heptameric rings stacked back-to-back. Interacts with the co-chaperonin GroES.

It is found in the cytoplasm. The catalysed reaction is ATP + H2O + a folded polypeptide = ADP + phosphate + an unfolded polypeptide.. Functionally, together with its co-chaperonin GroES, plays an essential role in assisting protein folding. The GroEL-GroES system forms a nano-cage that allows encapsulation of the non-native substrate proteins and provides a physical environment optimized to promote and accelerate protein folding. The chain is Chaperonin GroEL 2 from Burkholderia cenocepacia (strain HI2424).